The following is a 565-amino-acid chain: Putative lipase ATG15 (565 aa).

At 1–21 the chain is on the cytoplasmic side; the sequence is MISNDYTKFSSKRRSLRYSNR. Residues 22–42 traverse the membrane as a helical; Signal-anchor for type II membrane protein segment; it reads ILLLMGTILLIVVYFYSDILV. Residues 43 to 565 lie on the Lumenal side of the membrane; it reads DKSIIMFRNE…EYTTFTKRLI (523 aa). N-linked (GlcNAc...) asparagine glycosylation is present at asparagine 217. The Charge relay system role is filled by serine 347. The tract at residues 488–538 is disordered; sequence KKPKKQTTSSSSEKVDTSTTKSIDRTTITTRTNEKKWHPNPKDPSTTTTDD. Positions 493–518 are enriched in low complexity; it reads QTTSSSSEKVDTSTTKSIDRTTITTR. Over residues 519–528 the composition is skewed to basic and acidic residues; it reads TNEKKWHPNP.

It belongs to the AB hydrolase superfamily. Lipase family. In terms of assembly, binds to both phosphatidylinositol (PI) and phosphatidylinositol 3,5-bisphosphate (PIP2).

The protein localises to the endosome. It localises to the multivesicular body membrane. The protein resides in the prevacuolar compartment membrane. It catalyses the reaction a triacylglycerol + H2O = a diacylglycerol + a fatty acid + H(+). Functionally, lipase which is essential for lysis of subvacuolar cytoplasm to vacuole targeted bodies and intravacuolar autophagic bodies. Involved in the lysis of intravacuolar multivesicular body (MVB) vesicles. The intravacuolar membrane disintegration by ATG15 is critical to life span extension. This Vanderwaltozyma polyspora (strain ATCC 22028 / DSM 70294 / BCRC 21397 / CBS 2163 / NBRC 10782 / NRRL Y-8283 / UCD 57-17) (Kluyveromyces polysporus) protein is Putative lipase ATG15 (ATG15).